We begin with the raw amino-acid sequence, 172 residues long: Melanocortin-2 receptor accessory protein (172 aa).

The chain crosses the membrane as a helical span at residues 38–58; that stretch reads IVIAFWVSLAAFVVLLFLILL. Disordered regions lie at residues 105-136 and 151-172; these read QAQA…LGGF and GPLV…QLQS.

It belongs to the MRAP family. As to quaternary structure, homodimer and heterodimer. Forms antiparallel homodimers and heterodimers with MRAP2. Interacts with MC1R, MC2R, MC3R, MC4R and MC5R. Expressed in adrenal cortex, testis, breast, thyroid, lymph node, ovary and fat. Expressed in adipose tissues.

The protein resides in the cell membrane. Its subcellular location is the endoplasmic reticulum membrane. Modulator of melanocortin receptors (MC1R, MC2R, MC3R, MC4R and MC5R). Acts by increasing ligand-sensitivity of melanocortin receptors and enhancing generation of cAMP by the receptors. Required both for MC2R trafficking to the cell surface of adrenal cells and for signaling in response to corticotropin (ACTH). May be involved in the intracellular trafficking pathways in adipocyte cells. In Homo sapiens (Human), this protein is Melanocortin-2 receptor accessory protein (MRAP).